We begin with the raw amino-acid sequence, 334 residues long: Malate dehydrogenase (334 aa).

16 to 22 (GAAGQIA) is a binding site for NAD(+). Substrate-binding residues include R97 and R103. NAD(+) contacts are provided by residues N110, Q117, and 134–136 (VGN). Substrate contacts are provided by N136 and R167. H192 acts as the Proton acceptor in catalysis.

This sequence belongs to the LDH/MDH superfamily. MDH type 2 family.

It catalyses the reaction (S)-malate + NAD(+) = oxaloacetate + NADH + H(+). Catalyzes the reversible oxidation of malate to oxaloacetate. The polypeptide is Malate dehydrogenase (Nocardia farcinica (strain IFM 10152)).